Reading from the N-terminus, the 479-residue chain is tRNA-2-methylthio-N(6)-dimethylallyladenosine synthase (479 aa).

The region spanning 6–122 (KTVYIKTVGC…IPDMLTKVTS (117 aa)) is the MTTase N-terminal domain. Positions 15, 51, 85, 172, 176, and 179 each coordinate [4Fe-4S] cluster. One can recognise a Radical SAM core domain in the interval 158–390 (RPTPFQAYLR…LAVQDRISKE (233 aa)). The TRAM domain maps to 393-464 (QKLIGDTVEV…SHTLIGRVKT (72 aa)).

The protein belongs to the methylthiotransferase family. MiaB subfamily. Monomer. Requires [4Fe-4S] cluster as cofactor.

The protein localises to the cytoplasm. It carries out the reaction N(6)-dimethylallyladenosine(37) in tRNA + (sulfur carrier)-SH + AH2 + 2 S-adenosyl-L-methionine = 2-methylsulfanyl-N(6)-dimethylallyladenosine(37) in tRNA + (sulfur carrier)-H + 5'-deoxyadenosine + L-methionine + A + S-adenosyl-L-homocysteine + 2 H(+). Catalyzes the methylthiolation of N6-(dimethylallyl)adenosine (i(6)A), leading to the formation of 2-methylthio-N6-(dimethylallyl)adenosine (ms(2)i(6)A) at position 37 in tRNAs that read codons beginning with uridine. This chain is tRNA-2-methylthio-N(6)-dimethylallyladenosine synthase, found in Rhodopirellula baltica (strain DSM 10527 / NCIMB 13988 / SH1).